The sequence spans 508 residues: MILVLDFGSQYTQLIARRLRERGIYTEIVPFFESIENIQKKAPKGLILSGGPASVYAKDAYKPSGKIFDLNVPILGICYGMQYLVDFFGGVVVGANEQEFGKAVLEITQNSVIFEGVKIKSLVWMSHMDKVIELPKGFTTLAKSPNSPHCAIENGKIFGLQFHPEVVQSEEGGKILENFALLVCGCEKTWGMQHFAQREIARLKEKIANAKVLCAVSGGVDSTVVATLLHRAIKDNLIAVFVDHGLLRKNEKERVQAMFKDLKIPLNTIDAKEVFLSKLKGVSEPELKRKIIGETFIEVFEKEAKKHHLKGKIEFLAQGTLYPDVIESVSVKGPSKVIKTHHNVGGLPEWMDFKLIEPLRELFKDEVRLLGKELGVSQDFLMRHPFPGPGLAVRILGEISESKIKRLQEADFIFIEELKKANLYDKVWQAFCVLLNVNSVGVMGDNRTYENAICLRAVNASDGMTASFSFLEHSFLEKVSNRITNEVSGINRVVYDITSKPPGTIEWE.

The Glutamine amidotransferase type-1 domain occupies 1-189; the sequence is MILVLDFGSQ…ALLVCGCEKT (189 aa). The Nucleophile role is filled by Cys78. Residues His163 and Glu165 contribute to the active site. Residues 190 to 383 enclose the GMPS ATP-PPase domain; it reads WGMQHFAQRE…LGVSQDFLMR (194 aa). Position 217–223 (217–223) interacts with ATP; it reads SGGVDST.

In terms of assembly, homodimer.

The catalysed reaction is XMP + L-glutamine + ATP + H2O = GMP + L-glutamate + AMP + diphosphate + 2 H(+). The protein operates within purine metabolism; GMP biosynthesis; GMP from XMP (L-Gln route): step 1/1. Functionally, catalyzes the synthesis of GMP from XMP. The chain is GMP synthase [glutamine-hydrolyzing] (guaA) from Helicobacter pylori (strain ATCC 700392 / 26695) (Campylobacter pylori).